The chain runs to 132 residues: ATP synthase epsilon chain (132 aa).

It belongs to the ATPase epsilon chain family. F-type ATPases have 2 components, CF(1) - the catalytic core - and CF(0) - the membrane proton channel. CF(1) has five subunits: alpha(3), beta(3), gamma(1), delta(1), epsilon(1). CF(0) has three main subunits: a, b and c.

It is found in the cell membrane. Functionally, produces ATP from ADP in the presence of a proton gradient across the membrane. The protein is ATP synthase epsilon chain (atpC) of Geobacillus stearothermophilus (Bacillus stearothermophilus).